The primary structure comprises 348 residues: L-threonine 3-dehydrogenase (348 aa).

Cys42 serves as a coordination point for Zn(2+). Catalysis depends on charge relay system residues Thr44 and His47. Residues His67, Glu68, Cys97, Cys100, Cys103, and Cys111 each coordinate Zn(2+). NAD(+) contacts are provided by residues Leu179, Glu199, Arg204, 266–268 (LGL), and 291–292 (IT).

It belongs to the zinc-containing alcohol dehydrogenase family. As to quaternary structure, homotetramer. Zn(2+) is required as a cofactor.

It localises to the cytoplasm. It catalyses the reaction L-threonine + NAD(+) = (2S)-2-amino-3-oxobutanoate + NADH + H(+). It functions in the pathway amino-acid degradation; L-threonine degradation via oxydo-reductase pathway; glycine from L-threonine: step 1/2. In terms of biological role, catalyzes the NAD(+)-dependent oxidation of L-threonine to 2-amino-3-ketobutyrate. To a lesser extent, also catalyzes the oxidation of L-serine, D-threonine, butan-2,3-diol, butan-1,2-diol, and propan-1,2-diol and cannot oxidize other L-amino acids. Cannot utilize NADP(H) instead of NAD(H). In Pyrococcus furiosus (strain ATCC 43587 / DSM 3638 / JCM 8422 / Vc1), this protein is L-threonine 3-dehydrogenase.